The following is a 102-amino-acid chain: Small ribosomal subunit protein uS10 (102 aa).

It belongs to the universal ribosomal protein uS10 family. In terms of assembly, part of the 30S ribosomal subunit.

Involved in the binding of tRNA to the ribosomes. The polypeptide is Small ribosomal subunit protein uS10 (Paracoccus denitrificans (strain Pd 1222)).